The sequence spans 250 residues: Cell division protein ZapD (250 aa).

Belongs to the ZapD family. Interacts with FtsZ.

The protein resides in the cytoplasm. In terms of biological role, cell division factor that enhances FtsZ-ring assembly. Directly interacts with FtsZ and promotes bundling of FtsZ protofilaments, with a reduction in FtsZ GTPase activity. The polypeptide is Cell division protein ZapD (Bordetella petrii (strain ATCC BAA-461 / DSM 12804 / CCUG 43448)).